Reading from the N-terminus, the 97-residue chain is Spermatogenesis-associated protein 45 (97 aa).

The protein belongs to the SPATA45 family.

This chain is Spermatogenesis-associated protein 45 (Spata45), found in Mus musculus (Mouse).